An 860-amino-acid polypeptide reads, in one-letter code: Leucine--tRNA ligase (860 aa).

Residues 73–83 (VLQPIGWDAFG) carry the 'HIGH' region motif. Residues 650–654 (SPADM) carry the 'KMSKS' region motif. Residue D653 participates in ATP binding.

This sequence belongs to the class-I aminoacyl-tRNA synthetase family.

It is found in the cytoplasm. It catalyses the reaction tRNA(Leu) + L-leucine + ATP = L-leucyl-tRNA(Leu) + AMP + diphosphate. In Shigella flexneri, this protein is Leucine--tRNA ligase.